The chain runs to 234 residues: Large ribosomal subunit protein uL1 (234 aa).

Belongs to the universal ribosomal protein uL1 family. As to quaternary structure, part of the 50S ribosomal subunit.

Its function is as follows. Binds directly to 23S rRNA. The L1 stalk is quite mobile in the ribosome, and is involved in E site tRNA release. Functionally, protein L1 is also a translational repressor protein, it controls the translation of the L11 operon by binding to its mRNA. In Pectobacterium atrosepticum (strain SCRI 1043 / ATCC BAA-672) (Erwinia carotovora subsp. atroseptica), this protein is Large ribosomal subunit protein uL1.